The following is a 720-amino-acid chain: MVPLGYNNKYFGYVQDCQQQATDNSPIHYYTGDKQNQSYSQSMCKEQSQNTVTVSPASFNKKAQSTQGSYNRAMKSSSSLYSTCSTTPSKDSLLKNSSYPSWKSLDSSLSHHKSETTSLTSFTSTSSLEPSKISSRSRLLLPKTQTSSSIDLCWKSPSLESNQRVSTSSSTSVQHHEAPSLNIIWTTPSLESNQSEHDSQLCKSKSQKDSSLDRLWSSLLESSQKALSSPSFTNRLQRNSFPPTSSSLEFSRVARNSPLPDCSKPLKIPVSNSNNNVFSLPLSPAKSRKSTPSPHSFLPSRRLSTCQPKPKIVARCDPSTRAINTAVCHPKVQNTASLSDKQRPRQLPSIHPKPNPSGQRVSSPKPCIKNKIASVPCSRLPNKSSVERSVKTEPENEISWALDYSHPCIIKGGSVPVDVVNKIINSISKSTIQKDLSRQILFRRMRGKPNPRPGPRLSSTYSVCLECASAIKSQCNHLSGKRDPRCATLFVIPTPESSTDGKVDVKIILILSLPEKPSSTCFQLPMKDSKSENNLEALDDNLDVLEKITQFFPASESDFIQGLKTKRKCLAVSSESKDLSQEPQSIDWLLYVKNSNGIQLETQVQGPSSSSSSSCSSVSSSSSASSIGRPSPPTPWVDPTPVPVSGYVLAKVRSYHRLPPGTSWLEFIRGSSSDTIKLRQSPPVKAKPVRSHNSKCLKKGKRETSALLRYFQTKFQNEKS.

Positions 227–249 (LSSPSFTNRLQRNSFPPTSSSLE) are enriched in polar residues. Disordered regions lie at residues 227–250 (LSSPSFTNRLQRNSFPPTSSSLEF), 264–303 (KPLKIPVSNSNNNVFSLPLSPAKSRKSTPSPHSFLPSRRL), 333–366 (QNTASLSDKQRPRQLPSIHPKPNPSGQRVSSPKP), 602–640 (TQVQGPSSSSSSSCSSVSSSSSASSIGRPSPPTPWVDPT), and 678–698 (LRQSPPVKAKPVRSHNSKCLK). A compositionally biased stretch (low complexity) spans 608 to 626 (SSSSSSSCSSVSSSSSASS). Residues 630–640 (PSPPTPWVDPT) are compositionally biased toward pro residues. Residues 687 to 698 (KPVRSHNSKCLK) show a composition bias toward basic residues.

In terms of assembly, interacts (via C-terminus) with CSNK2A2. Phosphorylated by CK2 (casein kinase II), specifically by complexes containing catalytic subunit CSNK2A2. As to expression, expressed exclusively in testis (at protein level). Within testis, expressed mainly in the intermediate compartment of the seminiferous tubules with weaker expression in the basal and adluminal compartments.

Its subcellular location is the nucleus. Its function is as follows. May play a role in chromatin regulation of male germ cells. This is Casein kinase II subunit alpha'-interacting protein from Mus musculus (Mouse).